The sequence spans 304 residues: Acetylxylan esterase A (304 aa).

A signal peptide spans 1-24; it reads MLLSTHLLFVITTLVTSLLHPIDG. Catalysis depends on Ser148, which acts as the Charge relay system. N-linked (GlcNAc...) asparagine glycosylation occurs at Asn190.

Belongs to the carbohydrate esterase 1 (CE1) family. AxeA subfamily. In terms of assembly, monomer.

The protein localises to the secreted. It catalyses the reaction Deacetylation of xylans and xylo-oligosaccharides.. It functions in the pathway glycan degradation; xylan degradation. Its activity is regulated as follows. Inactivated by di-isopropylfluorophosphate and phenylmethylsulfonylfluorid (PMSF), a specific inhibitor of serine esterases. Acetylxylan esterase involved in the hydrolysis of xylan, a major structural heterogeneous polysaccharide found in plant biomass representing the second most abundant polysaccharide in the biosphere, after cellulose. Degrades acetylated xylans by cleaving acetyl side groups from the hetero-xylan backbone. The protein is Acetylxylan esterase A (axeA) of Aspergillus awamori (Black koji mold).